We begin with the raw amino-acid sequence, 148 residues long: Leghemoglobin 3 (148 aa).

Positions 2 to 148 constitute a Globin domain; sequence GFTEKQEALV…LSAAIKKAMS (147 aa). The residue at position 30 (Tyr-30) is a Nitrated tyrosine. Ser-45 is a binding site for heme b. Ser-45 carries the post-translational modification Phosphoserine. His-63 contributes to the O2 binding site. Positions 66, 95, and 98 each coordinate heme b. Residue Tyr-136 is modified to Nitrated tyrosine.

This sequence belongs to the plant globin family. Monomer. Post-translationally, nitrated in effective nodules and particularly in hypoxic conditions; this mechanism may play a protective role in the symbiosis by buffering toxic peroxynitrite NO(2)(-). Nitration level decrease during nodule senescence. Phosphorylation at Ser-45 disrupts the molecular environment of its porphyrin ring oxygen binding pocket, thus leading to a reduced oxygen consumption and to the delivery of oxygen O(2) to symbiosomes. Stem nodules.

It localises to the cytoplasm. The protein resides in the cytosol. Its subcellular location is the nucleus. Leghemoglobin that reversibly binds oxygen O(2) through a pentacoordinated heme iron. In stem nodules, facilitates the diffusion of oxygen to the bacteroids while preventing the bacterial nitrogenase from being inactivated by buffering dioxygen, nitric oxide and carbon monoxide, and promoting the formation of reactive oxygen species (ROS, e.g. H(2)O(2)). This role is essential for symbiotic nitrogen fixation (SNF). The polypeptide is Leghemoglobin 3 (Sesbania rostrata).